Consider the following 130-residue polypeptide: DNA-directed RNA polymerase subunit omega (130 aa).

The segment at 107-130 is disordered; it reads SLDVSQESHDDEIDDQDSGEEVPI. Positions 115–130 are enriched in acidic residues; it reads HDDEIDDQDSGEEVPI.

This sequence belongs to the RNA polymerase subunit omega family. The RNAP catalytic core consists of 2 alpha, 1 beta, 1 beta' and 1 omega subunit. When a sigma factor is associated with the core the holoenzyme is formed, which can initiate transcription.

It catalyses the reaction RNA(n) + a ribonucleoside 5'-triphosphate = RNA(n+1) + diphosphate. Its function is as follows. Promotes RNA polymerase assembly. Latches the N- and C-terminal regions of the beta' subunit thereby facilitating its interaction with the beta and alpha subunits. The sequence is that of DNA-directed RNA polymerase subunit omega from Wolbachia pipientis subsp. Culex pipiens (strain wPip).